The primary structure comprises 409 residues: Argininosuccinate synthase (409 aa).

Residues 8–16 and Ala-34 each bind ATP; that span reads AYSGGLDTS. An L-citrulline-binding site is contributed by Tyr-85. Gly-115 contacts ATP. Residues Thr-117, Asn-121, and Asp-122 each contribute to the L-aspartate site. L-citrulline is bound at residue Asn-121. L-citrulline-binding residues include Arg-125, Ser-178, Ser-187, Glu-268, and Tyr-280.

Belongs to the argininosuccinate synthase family. Type 1 subfamily. As to quaternary structure, homotetramer.

It is found in the cytoplasm. It carries out the reaction L-citrulline + L-aspartate + ATP = 2-(N(omega)-L-arginino)succinate + AMP + diphosphate + H(+). It participates in amino-acid biosynthesis; L-arginine biosynthesis; L-arginine from L-ornithine and carbamoyl phosphate: step 2/3. The protein is Argininosuccinate synthase of Thermotoga sp. (strain RQ2).